Reading from the N-terminus, the 473-residue chain is Serine palmitoyltransferase 1 (473 aa).

Over 1–15 the chain is Lumenal; sequence MATVAEQWVLVEMVQ. The interaction with SPTLC2 stretch occupies residues 1-66; the sequence is MATVAEQWVL…KEELIEEWQP (66 aa). A helical transmembrane segment spans residues 16–36; it reads ALYEAPAYHLILEGILILWII. Residues 37 to 473 are Cytoplasmic-facing; it reads RLVFSKTYKL…IREAAQAVLL (437 aa). A Phosphotyrosine; by ABL modification is found at Y164.

It belongs to the class-II pyridoxal-phosphate-dependent aminotransferase family. Component of the serine palmitoyltransferase (SPT) complex, which is also composed of SPTLC2 or SPTLC3 and SPTSSA or SPTSSB. The heterodimer with SPTLC2 or SPTLC3 forms the catalytic core of the enzyme, while SPTSSA or SPTSSB subunits determine substrate specificity. SPT also interacts with ORMDL proteins, especially ORMDL3, which negatively regulate SPT activity in the presence of ceramides. Forms dimers of heterodimers with SPTLC2. Interacts with RTN4 (isoform B). Requires pyridoxal 5'-phosphate as cofactor. Post-translationally, phosphorylation at Tyr-164 inhibits activity and promotes cell survival. In terms of tissue distribution, expressed in a variety of tissues. Highest expression in brain, kidney and liver. Expressed in brown and white adipose tissues.

It localises to the endoplasmic reticulum membrane. It carries out the reaction L-serine + hexadecanoyl-CoA + H(+) = 3-oxosphinganine + CO2 + CoA. The catalysed reaction is octadecanoyl-CoA + L-serine + H(+) = 3-oxoeicosasphinganine + CO2 + CoA. The enzyme catalyses tetradecanoyl-CoA + L-serine + H(+) = 3-oxohexadecasphinganine + CO2 + CoA. It catalyses the reaction dodecanoyl-CoA + L-serine + H(+) = 3-oxotetradecasphinganine + CO2 + CoA. The protein operates within lipid metabolism; sphingolipid metabolism. SPT complex catalytic activity is negatively regulated by ORMDL proteins, including ORMDL3, in the presence of ceramides. This mechanism allows to maintain ceramide levels at sufficient concentrations for the production of complex sphingolipids, but which prevents the accumulation of ceramides to levels that trigger apoptosis. Component of the serine palmitoyltransferase multisubunit enzyme (SPT) that catalyzes the initial and rate-limiting step in sphingolipid biosynthesis by condensing L-serine and activated acyl-CoA (most commonly palmitoyl-CoA) to form long-chain bases. The SPT complex is also composed of SPTLC2 or SPTLC3 and SPTSSA or SPTSSB. Within this complex, the heterodimer with SPTLC2 or SPTLC3 forms the catalytic core. The composition of the serine palmitoyltransferase (SPT) complex determines the substrate preference. The SPTLC1-SPTLC2-SPTSSA complex shows a strong preference for C16-CoA substrate, while the SPTLC1-SPTLC3-SPTSSA isozyme uses both C14-CoA and C16-CoA as substrates, with a slight preference for C14-CoA. The SPTLC1-SPTLC2-SPTSSB complex shows a strong preference for C18-CoA substrate, while the SPTLC1-SPTLC3-SPTSSB isozyme displays an ability to use a broader range of acyl-CoAs, without apparent preference. Required for adipocyte cell viability and metabolic homeostasis. The polypeptide is Serine palmitoyltransferase 1 (Sptlc1) (Mus musculus (Mouse)).